A 351-amino-acid chain; its full sequence is MSRQINTPDWILHANAPLRELNTFHIQAQARWLLEIIHPTALPQALTHPHIVGLPILVLGSGSNVLFAADPEECVLRFVNREVTILEHRIDHTLVRAGAGMAWHDLVLWSLQQGLSGLENLALIPGTVGACSIQNIGAYGVQVEEFVHIVEAYDQTEGKFVRLTASECEFAYRNSRFKREPNRYLITAVEFRLPLLHELNLNYAGISEELEALQITLPEPCDVAQAVINLRRRKLPDPEVLSNAGSFFKNPHLPREQAEQLRQHHPTLPIYPGETPESNKLSAAWLIEQCGWKGIREGDAGVAPQHSLVLVNYGEATGAELLALARRIAASVQERFGVAIEPETRLIGAQW.

Residues 25-196 (HIQAQARWLL…TAVEFRLPLL (172 aa)) form the FAD-binding PCMH-type domain. Residue Arg173 is part of the active site. Catalysis depends on Ser246, which acts as the Proton donor. Glu343 is an active-site residue.

The protein belongs to the MurB family. The cofactor is FAD.

It localises to the cytoplasm. It carries out the reaction UDP-N-acetyl-alpha-D-muramate + NADP(+) = UDP-N-acetyl-3-O-(1-carboxyvinyl)-alpha-D-glucosamine + NADPH + H(+). It participates in cell wall biogenesis; peptidoglycan biosynthesis. In terms of biological role, cell wall formation. The sequence is that of UDP-N-acetylenolpyruvoylglucosamine reductase from Xylella fastidiosa (strain M23).